The chain runs to 213 residues: Eukaryotic translation initiation factor isoform 4E (213 aa).

Residues 1–37 (MATEVAAAVPPPQLDAEENSGLEAAAAEAKIQPSSGP) form a disordered region. Residues 56–61 (QGAAWG), lysine 88, and 106–107 (WE) each bind mRNA. A disulfide bond links cysteine 111 and cysteine 150. Residues 157-162 (RQRQDK) and 202-205 (KRER) each bind mRNA.

Belongs to the eukaryotic initiation factor 4E family. In terms of assembly, EIF4F is a multi-subunit complex, the composition of which varies with external and internal environmental conditions. It is composed of at least EIF4A, EIF4E and EIF4G. EIF4E is also known to interact with other partners. In higher plants two isoforms of EIF4F have been identified, named isoform EIF4F and isoform EIF(iso)4F. Isoform EIF4F has subunits p220 and p26, whereas isoform EIF(iso)4F has subunits p82 and p28. (Microbial infection) Interacts with potyvirus viral genome-linked protein (VPg) of plum pox virus (PPV) strain D both in nucleus and cytoplasm; this interaction is possible in susceptible hosts but is impaired in resistant plants. According to the redox status, the Cys-111-Cys-150 disulfide bridge may have a role in regulating protein function by affecting its ability to bind capped mRNA. As to expression, mostly expressed in leaves, flower buds, leaf buds and anthers, to a lower extent in roots, stems and green immature fruit, and, at low levels, in petals.

The protein localises to the cytoplasm. The protein resides in the nucleus. In terms of biological role, component of the protein complex eIF4F, which is involved in the recognition of the mRNA cap, ATP-dependent unwinding of 5'-terminal secondary structure and recruitment of mRNA to the ribosome. Recognizes and binds the 7-methylguanosine-containing mRNA cap during an early step in the initiation of protein synthesis and facilitates ribosome binding by inducing the unwinding of the mRNAs secondary structures. Key component of recessive resistance to potyviruses such as the plum pox virus (PPV) strain D. Functionally, (Microbial infection) Susceptibility host factor required for viral infection by recruiting viral RNAs to the host ribosomal complex via an interaction with viral genome-linked protein (VPg). This chain is Eukaryotic translation initiation factor isoform 4E, found in Prunus domestica (Garden plum).